Here is a 471-residue protein sequence, read N- to C-terminus: Ribulose bisphosphate carboxylase large chain (471 aa).

Residues N115 and T165 each contribute to the substrate site. K167 acts as the Proton acceptor in catalysis. Position 169 (K169) interacts with substrate. K193, D195, and E196 together coordinate Mg(2+). Position 193 is an N6-carboxylysine (K193). H286 acts as the Proton acceptor in catalysis. R287, H319, and S371 together coordinate substrate.

The protein belongs to the RuBisCO large chain family. Type I subfamily. As to quaternary structure, heterohexadecamer of 8 large chains and 8 small chains. Mg(2+) serves as cofactor.

It localises to the carboxysome. The enzyme catalyses 2 (2R)-3-phosphoglycerate + 2 H(+) = D-ribulose 1,5-bisphosphate + CO2 + H2O. It carries out the reaction D-ribulose 1,5-bisphosphate + O2 = 2-phosphoglycolate + (2R)-3-phosphoglycerate + 2 H(+). Functionally, ruBisCO catalyzes two reactions: the carboxylation of D-ribulose 1,5-bisphosphate, the primary event in carbon dioxide fixation, as well as the oxidative fragmentation of the pentose substrate in the photorespiration process. Both reactions occur simultaneously and in competition at the same active site. In Prochlorococcus marinus (strain MIT 9301), this protein is Ribulose bisphosphate carboxylase large chain.